The following is a 353-amino-acid chain: Basic membrane protein C (353 aa).

An N-terminal signal peptide occupies residues 1–16; the sequence is MFKRFIFITLSLLVFA. Cys-17 is lipidated: N-palmitoyl cysteine. Cys-17 carries S-diacylglycerol cysteine lipidation.

Belongs to the BMP lipoprotein family. Monomer.

It localises to the cell inner membrane. Functionally, may be part of an ABC-type nucleoside uptake system involved in the purine salvage pathway. This is Basic membrane protein C (bmpC) from Borreliella burgdorferi (strain ATCC 35210 / DSM 4680 / CIP 102532 / B31) (Borrelia burgdorferi).